Reading from the N-terminus, the 592-residue chain is Calnexin (592 aa).

Positions 1–20 (MEGKWLLCMLLVLGTAIVEA) are cleaved as a signal peptide. At 21–481 (HDGHDDDVID…QMIEAAEERP (461 aa)) the chain is on the lumenal side. Residues Ser74 and Asp117 each coordinate Ca(2+). Lys137 is modified (N6-acetyllysine). Cys160 and Cys194 are joined by a disulfide. 4 residues coordinate an alpha-D-glucoside: Tyr164, Lys166, Tyr185, and Asp192. Residues 260 to 345 (GNLLNDMTPP…AEKPEDWDED (86 aa)) form a disordered region. Residues 274-319 (REIEDPEDRKPEDWDERPKIPDPEAVKPDDWDEDAPAKIPDEEATK) are compositionally biased toward basic and acidic residues. Residues 276 to 409 (IEDPEDRKPE…RKIPNPDFFE (134 aa)) form a p domain (Extended arm) region. A run of 5 repeats spans residues 278–290 (DPED…WDER), 295–307 (DPEA…WDED), 314–326 (DEEA…WLDD), 333–345 (DPDA…WDED), and 348–358 (GEWEAPQIANP). 2 4 X approximate repeats regions span residues 278–345 (DPED…WDED) and 348–405 (GEWE…IPNP). Residues 323–345 (WLDDEPEYVPDPDAEKPEDWDED) are compositionally biased toward acidic residues. The interval 326–359 (DEPEYVPDPDAEKPEDWDEDMDGEWEAPQIANPK) is interaction with PPIB. Cys360 and Cys366 are disulfide-bonded. 3 tandem repeats follow at residues 367-377 (GVWQRPMIDNP), 381-391 (GKWKPPMIDNP), and 395-405 (GIWKPRKIPNP). Glu425 lines the an alpha-D-glucoside pocket. Asp436 serves as a coordination point for Ca(2+). Residues 482–502 (WLWVVYILTVALPVFLVILFC) traverse the membrane as a helical segment. S-palmitoyl cysteine attachment occurs at residues Cys502 and Cys503. Residues 503–592 (CSGKKQTSAM…SPRNRKPRRE (90 aa)) lie on the Cytoplasmic side of the membrane. The segment at 503–592 (CSGKKQTSAM…SPRNRKPRRE (90 aa)) is sufficient to mediate interaction with SGIP1. The interval 511–592 (AMEYKKTDAP…SPRNRKPRRE (82 aa)) is disordered. The span at 525 to 547 (KEEEEEKEEEKDKGDEEEEGEEK) shows a compositional bias: acidic residues. Phosphoserine is present on Ser554. Thr562 bears the Phosphothreonine mark. Residue Ser564 is modified to Phosphoserine; by MAPK3. Ser583 is subject to Phosphoserine.

This sequence belongs to the calreticulin family. Interacts with MAPK3/ERK1. Interacts with KCNH2. Associates with ribosomes. Interacts with SGIP1; involved in negative regulation of endocytosis. The palmitoylated form interacts with the ribosome-translocon complex component SSR1, promoting efficient folding of glycoproteins. Interacts with SERPINA2P/SERPINA2 and with the S and Z variants of SERPINA1. Interacts with PPIB. Interacts with ZNRF4. Interacts with SMIM22. Interacts with TMX2. Interacts with TMEM35A/NACHO and CHRNA7. Interacts with reticulophagy regulators RETREG2 and RETREG3. Interacts with DNM1L; may form part of a larger protein complex at the ER-mitochondrial interface during mitochondrial fission. Interacts with ADAM7. Phosphorylated at Ser-564 by MAPK3/ERK1. Phosphorylation by MAPK3/ERK1 increases its association with ribosomes. Post-translationally, palmitoylation by DHHC6 leads to the preferential localization to the perinuclear rough ER. It mediates the association of calnexin with the ribosome-translocon complex (RTC) which is required for efficient folding of glycosylated proteins. In terms of processing, ubiquitinated, leading to proteasomal degradation. Probably ubiquitinated by ZNRF4.

The protein resides in the endoplasmic reticulum membrane. Its subcellular location is the mitochondrion membrane. The protein localises to the melanosome membrane. Functionally, calcium-binding protein that interacts with newly synthesized monoglucosylated glycoproteins in the endoplasmic reticulum. It may act in assisting protein assembly and/or in the retention within the ER of unassembled protein subunits. It seems to play a major role in the quality control apparatus of the ER by the retention of incorrectly folded proteins. Associated with partial T-cell antigen receptor complexes that escape the ER of immature thymocytes, it may function as a signaling complex regulating thymocyte maturation. Additionally it may play a role in receptor-mediated endocytosis at the synapse. This is Calnexin (CANX) from Pongo abelii (Sumatran orangutan).